The following is a 246-amino-acid chain: 2-deoxyglucose-6-phosphate phosphatase 1 (246 aa).

Aspartate 83 (nucleophile) is an active-site residue. Aspartate 83 lines the Mg(2+) pocket. Residues aspartate 83, glutamate 92, and aspartate 146 to asparagine 149 each bind substrate. Position 183 (aspartate 183) interacts with Mg(2+).

Belongs to the HAD-like hydrolase superfamily. DOG/GPP family. Mg(2+) is required as a cofactor.

It catalyses the reaction 2-deoxy-D-glucose 6-phosphate + H2O = 2-deoxy-D-glucose + phosphate. Phosphatase that is active on 2-deoxy-D-glucose 6-phosphate (2-DOG-6P), as well as on fructose-1-P. The protein is 2-deoxyglucose-6-phosphate phosphatase 1 of Saccharomyces cerevisiae (strain ATCC 204508 / S288c) (Baker's yeast).